Reading from the N-terminus, the 555-residue chain is MAQCNLFYQYPITPILEGHVRNILICTEEDIRRLQSQSSLRLREKIDQGHRDKLLRMRLKTELDALQRKMQKDSDVLNSHLKAIEDALLFTNDGEVNVETKADTQLLPKSPERLEKFNQVAITPLDPFIRFTDDFRGEMINTFFNNAQMWNFTFGSWFYKLKRVFYNEPGLRRALKITNVDSLTISKELLTVTVNALEQATVYPIFGSEMSDLEAALCILAAFYSTYENSQIDERTTLVDIITLLPVIFRLLGSEITALKNVSPSGTYFGFNDPSCMKFFVPMRKGKHYAENTFGNHVLVKMLLGRGVMQKIPGEKDSQNFDVEARLHGAIKNDVLVYWTYQLMRPKLGNNVPIFIHDQHYLRSGLVAIESLFLLWRILNSESLFNKRVGKFLLTSIFPQLENVDFAENNFEAGNIQNFEYLMHHYVVPMYNLQNDISISTLFPGLVAVCVNESVRLGWEHKCAGAPSDAVQVQSKENPFVEYIRAQMEQQADVAILEKHDCILFHFENGLNITLSFTLPRQRLFAMASSLFNVNDTYDFIYFLVLGFLPIPAII.

Residues 1-47 (MAQCNLFYQYPITPILEGHVRNILICTEEDIRRLQSQSSLRLREKID) are interaction with major capsid protein/MCP.

Belongs to the herpesviridae CVC2 protein family. As to quaternary structure, heterodimerizes with CVC1. Interacts with major capsid protein/MCP and triplex capsid protein 1/TRX1 at the pentamer vertices. Interacts with the large tegument protein/LTP.

It is found in the virion. It localises to the host nucleus. Capsid vertex-specific component that plays a role during viral DNA encapsidation, assuring correct genome cleavage and presumably stabilizing capsids that contain full-length viral genomes. Participates in the interaction between the capsid and the tegument through interaction with the large tegument protein/LTP. This Homo sapiens (Human) protein is Capsid vertex component 2.